A 102-amino-acid chain; its full sequence is Bowman-Birk type wound-induced proteinase inhibitor WIP1 (102 aa).

Positions 1 to 15 (MKSSPHLVLILCLQA) are cleaved as a signal peptide. 5 disulfides stabilise this stretch: Cys46-Cys102, Cys47-Cys60, Cys50-Cys98, Cys67-Cys74, and Cys71-Cys90.

Belongs to the Bowman-Birk serine protease inhibitor family.

The sequence is that of Bowman-Birk type wound-induced proteinase inhibitor WIP1 (WIP1) from Zea mays (Maize).